A 166-amino-acid chain; its full sequence is Ribosome maturation factor RimP (166 aa).

It belongs to the RimP family.

It localises to the cytoplasm. Functionally, required for maturation of 30S ribosomal subunits. The sequence is that of Ribosome maturation factor RimP from Rickettsia akari (strain Hartford).